The sequence spans 1514 residues: Mitogen-activated protein kinase-binding protein 1 (1514 aa).

Alanine 2 carries the N-acetylalanine modification. WD repeat units lie at residues 88 to 129, 132 to 173, 175 to 213, 276 to 315, 342 to 381, 387 to 436, 477 to 516, 519 to 561, 565 to 606, 614 to 653, 659 to 698, and 701 to 740; these read SSRK…QVAE, EHKY…VVAS, KVSSRVTAVSFSEDCSYFVTAGNRHIKFWYLDDSKTSKV, DSFTTTVAHCISVSQDYIFCGCADGTVRLFNPSNLHFLST, ARYPDTIALTFDPTNQWLSCVYNDHSIYVWDVRDPKKVGK, YHSS…VHGS, DPRVGIRSVCVSPNGQHLASGDRMGTLRVHELQSLSEMLK, AHDS…SLQQ, EHSS…DGVQ, VRKTTLYDMDVEPSWKYTAIGCQDRNIRIFNISSGKQKKL, GEDGTLIKVQTDPSGIYIATSCSDKNLSIFDFSSGECVAT, and GHSEIVTGMKFSNDCKHLISVSGDSCIFVWRLSSEMTISM. Disordered stretches follow at residues 748 to 804, 880 to 925, 951 to 1256, and 1299 to 1336; these read RQRQ…PALP, PSLQ…SQPC, EDGI…SSMA, and DIPKPLPDRPTLAAFSPVTKGRAPGEAEKPGFPVGLGK. Residues 789–800 are compositionally biased toward acidic residues; that stretch reads KEGEDEGTEEEL. Polar residues-rich tracts occupy residues 905 to 925 and 961 to 971; these read LETSLTSQNEKPPRPQASQPC and DNPTMDTSEFQ. The segment covering 996–1011 has biased composition (low complexity); the sequence is DSACSVDYSSSCLSSP. Over residues 1032–1048 the composition is skewed to acidic residues; the sequence is DLEEPAEGDEEEEEEEG. Residues 1113–1126 are compositionally biased toward low complexity; sequence PSPSSSSLALMSRP. Composition is skewed to polar residues over residues 1188–1200 and 1245–1256; these read SPFSGLQKAQSVH and HSYQNPTTSSMA. At serine 1198 the chain carries Phosphoserine.

Can form homodimers (via C-terminus). Interacts (via C-terminus) with WDR62 (via C-terminus). Interacts with MAPK9. Interacts (via N-terminus) with NOD2; the interaction is enhanced in presence of muramyl dipeptide (MDP). Interacts with MAPK10. Expressed in intestinal mucosa, where it is detected in epithelial cells, endothelial cells, smooth muscle cells and immune cells, such as lymphocytes. Expressed in kidney.

The protein resides in the cytoplasm. It localises to the nucleus. Its subcellular location is the cytoskeleton. It is found in the spindle pole. Its function is as follows. Negative regulator of NOD2 function. It down-regulates NOD2-induced processes such as activation of NF-kappa-B signaling, IL8 secretion and antibacterial response. Involved in JNK signaling pathway. The sequence is that of Mitogen-activated protein kinase-binding protein 1 (MAPKBP1) from Homo sapiens (Human).